The following is a 150-amino-acid chain: Large ribosomal subunit protein bL9 (150 aa).

This sequence belongs to the bacterial ribosomal protein bL9 family.

Its function is as follows. Binds to the 23S rRNA. The protein is Large ribosomal subunit protein bL9 of Polynucleobacter asymbioticus (strain DSM 18221 / CIP 109841 / QLW-P1DMWA-1) (Polynucleobacter necessarius subsp. asymbioticus).